The following is a 255-amino-acid chain: Octanoyltransferase (255 aa).

The interval methionine 1–proline 27 is disordered. One can recognise a BPL/LPL catalytic domain in the interval proline 59–threonine 240. Residues arginine 99 to histidine 106, alanine 171 to glycine 173, and glycine 184 to serine 186 each bind substrate. The Acyl-thioester intermediate role is filled by cysteine 202.

The protein belongs to the LipB family.

Its subcellular location is the cytoplasm. It carries out the reaction octanoyl-[ACP] + L-lysyl-[protein] = N(6)-octanoyl-L-lysyl-[protein] + holo-[ACP] + H(+). It functions in the pathway protein modification; protein lipoylation via endogenous pathway; protein N(6)-(lipoyl)lysine from octanoyl-[acyl-carrier-protein]: step 1/2. Functionally, catalyzes the transfer of endogenously produced octanoic acid from octanoyl-acyl-carrier-protein onto the lipoyl domains of lipoate-dependent enzymes. Lipoyl-ACP can also act as a substrate although octanoyl-ACP is likely to be the physiological substrate. The chain is Octanoyltransferase from Burkholderia thailandensis (strain ATCC 700388 / DSM 13276 / CCUG 48851 / CIP 106301 / E264).